A 506-amino-acid polypeptide reads, in one-letter code: Cytochrome P450 94B3 (506 aa).

A helical membrane pass occupies residues 2 to 22 (AFLLSFLILAFLITIIFFLSS). Residue C447 participates in heme binding.

Belongs to the cytochrome P450 family. The cofactor is heme.

It is found in the membrane. The protein localises to the endoplasmic reticulum membrane. It catalyses the reaction a jasmonyl-L-amino acid + reduced [NADPH--hemoprotein reductase] + O2 = a 12-hydroxyjasmonyl-L-alpha-amino acid + oxidized [NADPH--hemoprotein reductase] + H2O + H(+). The enzyme catalyses L-isoleucine-(+)-7-isojasmonate + NADPH + O2 + H(+) = L-isoleucine-(+)-12-hydroxy-7-isojasmonate + NADP(+) + H2O. It carries out the reaction a jasmonyl-L-isoleucinate + NADPH + O2 + H(+) = L-isoleucine-12-hydroxyjasmonate + NADP(+) + H2O. Functionally, hydroxylase involved in the oxidation of the plant hormone jasmonoyl-L-isoleucine (JA-Ile), a bioactive phytohormone of the jasmonate-mediated signaling pathway. Converts JA-Ile to 12-hydroxy-JA-Ile. Exerts negative feedback control on JA-Ile levels and plays a key role in attenuation of jasmonate responses. Negatively regulates the expression of wound-induced genes TIFY11A/JAZ5, TIFY5A/JAZ8 and TIFY5A/JAZ10. Catalyzes the hydroxylation of jasmonoyl-L-valine (JA-Val), jasmonoyl-L-leucine (JA-Leu) and jasmonoyl-L-phenylalanine (JA-Phe) in vitro. Converts JA-Val, JA-Leu and JA-Phe to 12-hydroxy-JA-Val, 12-hydroxy-JA-Leu and 12-hydroxy-JA-Phe, respectively. The polypeptide is Cytochrome P450 94B3 (Arabidopsis thaliana (Mouse-ear cress)).